The sequence spans 234 residues: Large ribosomal subunit protein uL1 (234 aa).

It belongs to the universal ribosomal protein uL1 family. Part of the 50S ribosomal subunit.

Functionally, binds directly to 23S rRNA. The L1 stalk is quite mobile in the ribosome, and is involved in E site tRNA release. Protein L1 is also a translational repressor protein, it controls the translation of the L11 operon by binding to its mRNA. In Desulfatibacillum aliphaticivorans, this protein is Large ribosomal subunit protein uL1.